The primary structure comprises 481 residues: PRAME family member 22 (481 aa).

The stretch at 99 to 126 (RWKLQVLELRDVDENFWTIWSGARPLSC) is one LRR 1; degenerate repeat. Residues 181–205 (HLCCTKVVNYSMSILNFRNILETVY) form an LRR 2; degenerate repeat. An LRR 3; degenerate repeat occupies 206–232 (PDSIQVLEIWNMCWPCMIVEFSRYLSQ). One copy of the LRR 4; degenerate repeat lies at 233–267 (MRNLRKLFISDGCRYLLSSDSQEQLVAEFSSVLLR). 5 LRR repeats span residues 268–293 (LEYLQMLYVRRVCFFRGHLDQLIRCL), 294–325 (RSPLETLALTYGFLEKVDLKCLPRYPSLSQLK), 326–344 (QLNLSHGALRFIRLEPLRA), 350–377 (AATLQTLFLVDCGIRDSKLRVILPALSC), and 378–402 (CSNLTTFCFHGNDTSMDGLKDLLRH).

It belongs to the PRAME family.

The sequence is that of PRAME family member 22 from Homo sapiens (Human).